We begin with the raw amino-acid sequence, 216 residues long: Ribosomal RNA large subunit methyltransferase E (216 aa).

Positions 67, 69, 87, 103, and 128 each coordinate S-adenosyl-L-methionine. The active-site Proton acceptor is K168.

It belongs to the class I-like SAM-binding methyltransferase superfamily. RNA methyltransferase RlmE family.

Its subcellular location is the cytoplasm. The enzyme catalyses uridine(2552) in 23S rRNA + S-adenosyl-L-methionine = 2'-O-methyluridine(2552) in 23S rRNA + S-adenosyl-L-homocysteine + H(+). Functionally, specifically methylates the uridine in position 2552 of 23S rRNA at the 2'-O position of the ribose in the fully assembled 50S ribosomal subunit. This is Ribosomal RNA large subunit methyltransferase E from Acinetobacter baylyi (strain ATCC 33305 / BD413 / ADP1).